We begin with the raw amino-acid sequence, 521 residues long: MPTPLPSSSAWLAFADAARHSSRRGARLRVIEAAGLRVDLTAQAHSDDLDSAAEDLLAQQDFDNARAQLFDGGPANWTEHRPAWHTALRAARPPTPVAGAILGERDRLRRFVQDADMRGAYRHVLHLGIGGSDWGPRMVTRALRHNGLKREVRFASNVDSHAVADALHHLDPHDTLIIVASKSFTTTEPLANAEVAMNWLRNAGVADPVRQVVAITANVDAALDFGISPQHIFRFWDWVGGRYSLWSAIGLPVALALGCDALDELLAGAAAMDQHFLHTPMRRNAPLQMALAGVANRSVLGYGSLAITPYDSRLTHLVPWAQQLEMESLGKVAGHDGSPAGVPTGPVVWGMTGTDCQHTFFQWLHQDTAGAPVDFIVCEQADHPYDHFHKLLIANCLAQRAALLRGKPFDEALKEARLVESDPQQAEILAHHRVHPGGRPSTLIMLPRLSAHALGALLAMYEHKVFAQGVLWGINPFDQWGVEYGKALARNIIRELENPSSEVNQQDPSTRYWIDALRKQP.

Residue Glu327 is the Proton donor of the active site. Active-site residues include His358 and Lys486.

It belongs to the GPI family.

The protein resides in the cytoplasm. It catalyses the reaction alpha-D-glucose 6-phosphate = beta-D-fructose 6-phosphate. Its pathway is carbohydrate biosynthesis; gluconeogenesis. The protein operates within carbohydrate degradation; glycolysis; D-glyceraldehyde 3-phosphate and glycerone phosphate from D-glucose: step 2/4. Functionally, catalyzes the reversible isomerization of glucose-6-phosphate to fructose-6-phosphate. The chain is Glucose-6-phosphate isomerase from Bordetella bronchiseptica (strain ATCC BAA-588 / NCTC 13252 / RB50) (Alcaligenes bronchisepticus).